The following is a 318-amino-acid chain: Acetyl-coenzyme A carboxylase carboxyl transferase subunit alpha (318 aa).

Residues Arg41–Ser295 form the CoA carboxyltransferase C-terminal domain.

This sequence belongs to the AccA family. Acetyl-CoA carboxylase is a heterohexamer composed of biotin carboxyl carrier protein (AccB), biotin carboxylase (AccC) and two subunits each of ACCase subunit alpha (AccA) and ACCase subunit beta (AccD).

The protein resides in the cytoplasm. The enzyme catalyses N(6)-carboxybiotinyl-L-lysyl-[protein] + acetyl-CoA = N(6)-biotinyl-L-lysyl-[protein] + malonyl-CoA. The protein operates within lipid metabolism; malonyl-CoA biosynthesis; malonyl-CoA from acetyl-CoA: step 1/1. Its function is as follows. Component of the acetyl coenzyme A carboxylase (ACC) complex. First, biotin carboxylase catalyzes the carboxylation of biotin on its carrier protein (BCCP) and then the CO(2) group is transferred by the carboxyltransferase to acetyl-CoA to form malonyl-CoA. The chain is Acetyl-coenzyme A carboxylase carboxyl transferase subunit alpha from Idiomarina loihiensis (strain ATCC BAA-735 / DSM 15497 / L2-TR).